The primary structure comprises 168 residues: MADLFALTEEALAGMDIELVDVERAAMGLLRVTIDRVDGVRIEDCEQVSRQLSRVYEVENIDYKRLEVGSPGVDRPLRNEAEFRRFAGERIEIKLREALDGRKVFSGTLRAPEADGASGQDDTAGAGKAVFGLEFEAKKNDIQVLSFTLDDIERAKLDPVLDFKGKKR.

This sequence belongs to the RimP family.

Its subcellular location is the cytoplasm. Its function is as follows. Required for maturation of 30S ribosomal subunits. The chain is Ribosome maturation factor RimP from Bordetella bronchiseptica (strain ATCC BAA-588 / NCTC 13252 / RB50) (Alcaligenes bronchisepticus).